Here is a 407-residue protein sequence, read N- to C-terminus: MVLAAPLLLGFLLLALELRPRGEAAEGPAAAAAAAAAAAAAGVGGERSSRPAPSVAPEPDGCPVCVWRQHSRELRLESIKSQILSKLRLKEAPNISREVVKQLLPKAPPLQQILDLHDFQGDALQPEDFLEEDEYHATTETVISMAQETDPAVQTDGSPLCCHFHFSPKVMFTKVLKAQLWVYLRPVPRPATVYLQILRLKPLTGEGTAGGGGGGRRHIRIRSLKIELHSRSGHWQSIDFKQVLHSWFRQPQSNWGIEINAFDPSGTDLAVTSLGPGAEGLHPFMELRVLENTKRSRRNLGLDCDEHSSESRCCRYPLTVDFEAFGWDWIIAPKRYKANYCSGQCEYMFMQKYPHTHLVQQANPRGSAGPCCTPTKMSPINMLYFNDKQQIIYGKIPGMVVDRCGCS.

Positions 1-24 (MVLAAPLLLGFLLLALELRPRGEA) are cleaved as a signal peptide. Residues 25-298 (AEGPAAAAAA…VLENTKRSRR (274 aa)) constitute a propeptide that is removed on maturation. An N-linked (GlcNAc...) asparagine glycan is attached at Asn-94. 4 disulfides stabilise this stretch: Cys-304–Cys-314, Cys-313–Cys-372, Cys-341–Cys-404, and Cys-345–Cys-406.

Belongs to the TGF-beta family. In terms of assembly, homodimer; disulfide-linked. Interacts directly with ACVR2B. Interacts directly with ACVR2A. Interacts with ACVR1B, TGFBR1 and ACVR1C in an ACVR2B-dependent manner. Interacts with FST isoform 2/FS-288. Post-translationally, synthesized as large precursor molecule that undergoes proteolytic cleavage by furin-like proteases. This produces an inactive form consisting of the mature C-terminal portion non-covalently bound to its cleaved N-terminal propeptide. Activation of the mature form requires additional cleavage of the propeptide by a tolloid-like metalloproteinase. As to expression, in the embryo, strong expression is seen in the palatal epithelia, including the medial edge epithelial and midline epithelial seam of the palatal shelves. Less pronounced expression is also seen throughout the palatal shelf and tongue mesenchyme.

It localises to the secreted. Functionally, secreted signal that acts globally to regulate anterior/posterior axial patterning during development. May play critical roles in patterning both mesodermal and neural tissues. It is required for proper vertebral patterning and orofacial development. Signals through activin receptors type-2, ACVR2A and ACVR2B, and activin receptors type-1, ACVR1B, ACVR1C and TGFBR1 leading to the phosphorylation of SMAD2 and SMAD3. The sequence is that of Growth/differentiation factor 11 (GDF11) from Homo sapiens (Human).